The chain runs to 265 residues: Energy-coupling factor transporter transmembrane protein EcfT (265 aa).

The next 5 membrane-spanning stretches (helical) occupy residues 32 to 52 (MVLLFVIDDFTGYAFPAVFII), 72 to 92 (LVIIIVLTFVLNLFMIKGRVI), 115 to 135 (LIMLIVGTSLLTLTTSPIALT), 150 to 170 (VPAHELAMMMTIALRFIPTLM), and 245 to 265 (LAAFIATGLLAVGSIMSRFIW).

Belongs to the energy-coupling factor EcfT family. Forms a stable energy-coupling factor (ECF) transporter complex composed of 2 membrane-embedded substrate-binding proteins (S component), 2 ATP-binding proteins (A component) and 2 transmembrane proteins (T component). May be able to interact with more than 1 S component at a time.

The protein resides in the cell membrane. Transmembrane (T) component of an energy-coupling factor (ECF) ABC-transporter complex. Unlike classic ABC transporters this ECF transporter provides the energy necessary to transport a number of different substrates. The sequence is that of Energy-coupling factor transporter transmembrane protein EcfT from Thermosediminibacter oceani (strain ATCC BAA-1034 / DSM 16646 / JW/IW-1228P).